A 496-amino-acid chain; its full sequence is Cytochrome P450 71B1 (496 aa).

Cys436 serves as a coordination point for heme.

This sequence belongs to the cytochrome P450 family. The cofactor is heme.

This Thlaspi arvense (Field penny-cress) protein is Cytochrome P450 71B1 (CYP71B1).